Here is a 228-residue protein sequence, read N- to C-terminus: Cytochrome c oxidase subunit 2 (228 aa).

Residues methionine 1–histidine 26 lie on the Mitochondrial intermembrane side of the membrane. Residues alanine 27 to leucine 47 form a helical membrane-spanning segment. The Mitochondrial matrix portion of the chain corresponds to asparagine 48 to threonine 60. Residues valine 61–leucine 81 traverse the membrane as a helical segment. At arginine 82–proline 228 the chain is on the mitochondrial intermembrane side. Histidine 161, cysteine 196, glutamate 198, cysteine 200, histidine 204, and methionine 207 together coordinate Cu cation. Glutamate 198 provides a ligand contact to Mg(2+).

Belongs to the cytochrome c oxidase subunit 2 family. Component of the cytochrome c oxidase (complex IV, CIV), a multisubunit enzyme composed of a catalytic core of 3 subunits and several supernumerary subunits. The complex exists as a monomer or a dimer and forms supercomplexes (SCs) in the inner mitochondrial membrane with ubiquinol-cytochrome c oxidoreductase (cytochrome b-c1 complex, complex III, CIII). The cofactor is Cu cation.

The protein resides in the mitochondrion inner membrane. The catalysed reaction is 4 Fe(II)-[cytochrome c] + O2 + 8 H(+)(in) = 4 Fe(III)-[cytochrome c] + 2 H2O + 4 H(+)(out). Functionally, component of the cytochrome c oxidase, the last enzyme in the mitochondrial electron transport chain which drives oxidative phosphorylation. The respiratory chain contains 3 multisubunit complexes succinate dehydrogenase (complex II, CII), ubiquinol-cytochrome c oxidoreductase (cytochrome b-c1 complex, complex III, CIII) and cytochrome c oxidase (complex IV, CIV), that cooperate to transfer electrons derived from NADH and succinate to molecular oxygen, creating an electrochemical gradient over the inner membrane that drives transmembrane transport and the ATP synthase. Cytochrome c oxidase is the component of the respiratory chain that catalyzes the reduction of oxygen to water. Electrons originating from reduced cytochrome c in the intermembrane space (IMS) are transferred via the dinuclear copper A center (CU(A)) of subunit 2 and heme A of subunit 1 to the active site in subunit 1, a binuclear center (BNC) formed by heme A3 and copper B (CU(B)). The BNC reduces molecular oxygen to 2 water molecules using 4 electrons from cytochrome c in the IMS and 4 protons from the mitochondrial matrix. This is Cytochrome c oxidase subunit 2 (COII) from Lumbricus terrestris (Common earthworm).